The chain runs to 182 residues: ADP-ribosylation factor-like protein 3 (182 aa).

G2 carries N-myristoyl glycine lipidation. Phosphoserine is present on S5. Residues 24-31, T48, 67-71, G70, 126-129, and 159-161 contribute to the GTP site; these read GLDNAGKT, DIGGQ, NKQD, and SAL. Mg(2+) contacts are provided by T31 and T48.

Belongs to the small GTPase superfamily. Arf family. As to quaternary structure, found in a complex with ARL3, RP2 and UNC119 (or UNC119B); RP2 induces hydrolysis of GTP ARL3 in the complex, leading to the release of UNC119 (or UNC119B). Interacts with RP2; interaction is direct and stimulated with the activated GTP-bound form of ARL3. Interacts with SYS1. Interacts with ARL2BP; the GTP-bound form interacts with ARL2BP. Microtubule-associated protein. Does not interact with TBCC. Interacts with RP2. Interacts with PDE6D; the interaction occurs specifically with the GTP-bound form of ARL3. Interacts with GGA1; the interaction recruits PKD1:PKD2 complex to trans-Golgi network and is required for ciliary targeting of PKD1:PKD2 complex. Interacts with DNAAF9.

Its subcellular location is the golgi apparatus membrane. It localises to the cytoplasm. The protein localises to the cytoskeleton. It is found in the spindle. The protein resides in the nucleus. Its subcellular location is the microtubule organizing center. It localises to the centrosome. The protein localises to the cell projection. It is found in the cilium. Its function is as follows. Small GTP-binding protein which cycles between an inactive GDP-bound and an active GTP-bound form, and the rate of cycling is regulated by guanine nucleotide exchange factors (GEF) and GTPase-activating proteins (GAP). Required for normal cytokinesis and cilia signaling. Requires assistance from GTPase-activating proteins (GAPs) like RP2 and PDE6D, in order to cycle between inactive GDP-bound and active GTP-bound forms. Required for targeting proteins to the cilium, including myristoylated NPHP3 and prenylated INPP5E. Targets NPHP3 to the ciliary membrane by releasing myristoylated NPHP3 from UNC119B cargo adapter into the cilium. Required for PKD1:PKD2 complex targeting from the trans-Golgi network to the cilium. The polypeptide is ADP-ribosylation factor-like protein 3 (ARL3) (Sus scrofa (Pig)).